Reading from the N-terminus, the 284-residue chain is D-tagatose-1,6-bisphosphate aldolase subunit GatY (284 aa).

The active-site Proton donor is the Asp-82. Zn(2+) contacts are provided by His-83 and His-180. Gly-181 provides a ligand contact to dihydroxyacetone phosphate. A Zn(2+)-binding site is contributed by His-208. Residues 209 to 211 (GAS) and 230 to 233 (NVAT) contribute to the dihydroxyacetone phosphate site.

Belongs to the class II fructose-bisphosphate aldolase family. TagBP aldolase GatY subfamily. In terms of assembly, forms a complex with GatZ. Requires Zn(2+) as cofactor.

It catalyses the reaction D-tagatofuranose 1,6-bisphosphate = D-glyceraldehyde 3-phosphate + dihydroxyacetone phosphate. The protein operates within carbohydrate metabolism; D-tagatose 6-phosphate degradation; D-glyceraldehyde 3-phosphate and glycerone phosphate from D-tagatose 6-phosphate: step 2/2. In terms of biological role, catalytic subunit of the tagatose-1,6-bisphosphate aldolase GatYZ, which catalyzes the reversible aldol condensation of dihydroxyacetone phosphate (DHAP or glycerone-phosphate) with glyceraldehyde 3-phosphate (G3P) to produce tagatose 1,6-bisphosphate (TBP). Requires GatZ subunit for full activity and stability. Is involved in the catabolism of galactitol. This chain is D-tagatose-1,6-bisphosphate aldolase subunit GatY, found in Shigella sonnei (strain Ss046).